A 319-amino-acid polypeptide reads, in one-letter code: 4-hydroxy-3-methylbut-2-enyl diphosphate reductase (319 aa).

Cysteine 17 is a binding site for [4Fe-4S] cluster. Positions 46 and 79 each coordinate (2E)-4-hydroxy-3-methylbut-2-enyl diphosphate. Dimethylallyl diphosphate is bound by residues histidine 46 and histidine 79. Residues histidine 46 and histidine 79 each coordinate isopentenyl diphosphate. Cysteine 101 serves as a coordination point for [4Fe-4S] cluster. Histidine 129 serves as a coordination point for (2E)-4-hydroxy-3-methylbut-2-enyl diphosphate. Histidine 129 contacts dimethylallyl diphosphate. An isopentenyl diphosphate-binding site is contributed by histidine 129. The active-site Proton donor is glutamate 131. (2E)-4-hydroxy-3-methylbut-2-enyl diphosphate is bound at residue threonine 170. Cysteine 200 serves as a coordination point for [4Fe-4S] cluster. Positions 228, 229, 230, and 273 each coordinate (2E)-4-hydroxy-3-methylbut-2-enyl diphosphate. Dimethylallyl diphosphate contacts are provided by serine 228, serine 229, asparagine 230, and serine 273. Serine 228, serine 229, asparagine 230, and serine 273 together coordinate isopentenyl diphosphate.

Belongs to the IspH family. It depends on [4Fe-4S] cluster as a cofactor.

The enzyme catalyses isopentenyl diphosphate + 2 oxidized [2Fe-2S]-[ferredoxin] + H2O = (2E)-4-hydroxy-3-methylbut-2-enyl diphosphate + 2 reduced [2Fe-2S]-[ferredoxin] + 2 H(+). It catalyses the reaction dimethylallyl diphosphate + 2 oxidized [2Fe-2S]-[ferredoxin] + H2O = (2E)-4-hydroxy-3-methylbut-2-enyl diphosphate + 2 reduced [2Fe-2S]-[ferredoxin] + 2 H(+). It participates in isoprenoid biosynthesis; dimethylallyl diphosphate biosynthesis; dimethylallyl diphosphate from (2E)-4-hydroxy-3-methylbutenyl diphosphate: step 1/1. It functions in the pathway isoprenoid biosynthesis; isopentenyl diphosphate biosynthesis via DXP pathway; isopentenyl diphosphate from 1-deoxy-D-xylulose 5-phosphate: step 6/6. Catalyzes the conversion of 1-hydroxy-2-methyl-2-(E)-butenyl 4-diphosphate (HMBPP) into a mixture of isopentenyl diphosphate (IPP) and dimethylallyl diphosphate (DMAPP). Acts in the terminal step of the DOXP/MEP pathway for isoprenoid precursor biosynthesis. In Cereibacter sphaeroides (strain ATCC 17023 / DSM 158 / JCM 6121 / CCUG 31486 / LMG 2827 / NBRC 12203 / NCIMB 8253 / ATH 2.4.1.) (Rhodobacter sphaeroides), this protein is 4-hydroxy-3-methylbut-2-enyl diphosphate reductase.